The following is a 507-amino-acid chain: UDP-N-acetylhexosamine pyrophosphorylase-like protein 1 (507 aa).

A Substrate binding motif is present at residues Leu-111–Gly-114. UTP contacts are provided by residues Leu-111 to Gly-114, Lys-125, Gln-199, and Gly-225. Asn-226 contacts substrate. Residue Asp-256 participates in UTP binding. Residues Glu-306–Tyr-307 carry the Substrate binding motif. Lys-380 contributes to the UTP binding site. Residue Lys-410 coordinates substrate.

Belongs to the UDPGP type 1 family.

The polypeptide is UDP-N-acetylhexosamine pyrophosphorylase-like protein 1 (Uap1l1) (Mus musculus (Mouse)).